The chain runs to 95 residues: Nodulin (95 aa).

In Striga hermonthica (Purple witchweed), this protein is Nodulin.